The sequence spans 226 residues: Protein-L-isoaspartate(D-aspartate) O-methyltransferase (226 aa).

S-adenosyl-L-homocysteine contacts are provided by residues 57-60 (VTIS), H65, S89, 115-116 (EH), 147-148 (DG), and T222. Residue S60 is part of the active site.

The protein belongs to the methyltransferase superfamily. L-isoaspartyl/D-aspartyl protein methyltransferase family. Monomer.

Its subcellular location is the cytoplasm. The protein resides in the cytosol. It catalyses the reaction [protein]-L-isoaspartate + S-adenosyl-L-methionine = [protein]-L-isoaspartate alpha-methyl ester + S-adenosyl-L-homocysteine. In terms of biological role, initiates the repair of damaged proteins by catalyzing methyl esterification of L-isoaspartyl and D-aspartyl residues produced by spontaneous isomerization and racemization of L-aspartyl and L-asparaginyl residues in aging peptides and proteins. This is Protein-L-isoaspartate(D-aspartate) O-methyltransferase (Pcmt) from Drosophila melanogaster (Fruit fly).